The following is a 267-amino-acid chain: Tryptophan synthase alpha chain (267 aa).

Residues Glu47 and Asp58 each act as proton acceptor in the active site.

Belongs to the TrpA family. In terms of assembly, tetramer of two alpha and two beta chains.

It catalyses the reaction (1S,2R)-1-C-(indol-3-yl)glycerol 3-phosphate + L-serine = D-glyceraldehyde 3-phosphate + L-tryptophan + H2O. It participates in amino-acid biosynthesis; L-tryptophan biosynthesis; L-tryptophan from chorismate: step 5/5. In terms of biological role, the alpha subunit is responsible for the aldol cleavage of indoleglycerol phosphate to indole and glyceraldehyde 3-phosphate. The chain is Tryptophan synthase alpha chain from Chlorobium phaeobacteroides (strain DSM 266 / SMG 266 / 2430).